The sequence spans 253 residues: 3-dehydroquinate dehydratase (253 aa).

3-dehydroquinate-binding positions include 46–48 (EFR) and Arg-82. His-143 acts as the Proton donor/acceptor in catalysis. The active-site Schiff-base intermediate with substrate is Lys-170. The 3-dehydroquinate site is built by Arg-213, Ser-232, and Gln-236.

This sequence belongs to the type-I 3-dehydroquinase family. Homodimer.

The enzyme catalyses 3-dehydroquinate = 3-dehydroshikimate + H2O. The protein operates within metabolic intermediate biosynthesis; chorismate biosynthesis; chorismate from D-erythrose 4-phosphate and phosphoenolpyruvate: step 3/7. Its function is as follows. Involved in the third step of the chorismate pathway, which leads to the biosynthesis of aromatic amino acids. Catalyzes the cis-dehydration of 3-dehydroquinate (DHQ) and introduces the first double bond of the aromatic ring to yield 3-dehydroshikimate. The sequence is that of 3-dehydroquinate dehydratase from Clostridium novyi (strain NT).